The primary structure comprises 300 residues: Rhodopsin (300 aa).

Over 1 to 18 (LHMIHLHWYQYPPMNPMM) the chain is Extracellular. Residues 19 to 43 (YPLLLVFMLITGILCLAGNFVTIWV) form a helical membrane-spanning segment. Residues 44–55 (FMNTKSLRTPAN) are Cytoplasmic-facing. A helical membrane pass occupies residues 56-78 (LLVVNLAMSDFLMMFTMFPPMMV). The Extracellular segment spans residues 79–92 (TCYYHTWTLGATFC). A disulfide bridge links Cys-92 with Cys-168. The helical transmembrane segment at 93-115 (QVYAFLGNLCGCASIWTMVFITF) threads the bilayer. The 'Ionic lock' involved in activated form stabilization motif lies at 116-118 (DRY). Topologically, residues 116 to 134 (DRYNVIVKGVAGEPLSTKK) are cytoplasmic. A helical transmembrane segment spans residues 135–155 (ASLWILTIWILSITWCIAPFF). The Extracellular segment spans residues 156 to 181 (GWNRYVPEGNTGCGTDYLSEDILSRS). The chain crosses the membrane as a helical span at residues 182–203 (YLYIYSTWVYFLPLAITIYCHV). The Cytoplasmic segment spans residues 204 to 244 (FIIKAVAAHEKGMRDQAKKMGIKSLRNEEAQKTSAECRLAK). The chain crosses the membrane as a helical span at residues 245–266 (IAMTTVALWFIAWTPYLLINWV). The Extracellular segment spans residues 267-277 (GMFARSYLSPV). The helical transmembrane segment at 278–299 (YTIWGYVFAKANAVYNPIVYAI) threads the bilayer. The residue at position 287 (Lys-287) is an N6-(retinylidene)lysine.

The protein belongs to the G-protein coupled receptor 1 family. Opsin subfamily. In terms of assembly, homodimer. Interacts with GNAQ. Contains one covalently linked retinal chromophore.

The protein localises to the cell projection. Its subcellular location is the rhabdomere membrane. Its function is as follows. Photoreceptor required for image-forming vision at low light intensity. Can use both retinal and 3-dehydroretinal as visual pigment. Light-induced isomerization of 11-cis to all-trans retinal triggers a conformational change that activates signaling via G-proteins. Signaling via GNAQ probably mediates the activation of phospholipase C. This chain is Rhodopsin (RHO), found in Cambarus maculatus (Freckled crayfish).